We begin with the raw amino-acid sequence, 161 residues long: Large ribosomal subunit protein uL15 (161 aa).

A disordered region spans residues 1-41 (MTKLNELAPAPGSTKGRMRVGRGPGSGKGKTAGRGVKGQKA). The span at 22 to 36 (RGPGSGKGKTAGRGV) shows a compositional bias: gly residues.

This sequence belongs to the universal ribosomal protein uL15 family. In terms of assembly, part of the 50S ribosomal subunit.

Functionally, binds to the 23S rRNA. This is Large ribosomal subunit protein uL15 from Caulobacter sp. (strain K31).